The primary structure comprises 546 residues: Mercuric reductase (546 aa).

Positions 2–66 (NKFKVNISGM…AIDEANYQAG (65 aa)) constitute an HMA domain. Positions 13 and 16 each coordinate a metal cation. FAD contacts are provided by alanine 96, glycine 116, and threonine 121. An intrachain disulfide couples cysteine 122 to cysteine 127. The FAD site is built by lysine 131 and alanine 195. Residues 256–263 (GSGYIGME) and glycine 346 contribute to the NAD(+) site. FAD contacts are provided by aspartate 387 and valine 395. Hg(2+) contacts are provided by cysteine 543 and cysteine 544.

It belongs to the class-I pyridine nucleotide-disulfide oxidoreductase family. As to quaternary structure, homodimer. FAD is required as a cofactor.

It carries out the reaction Hg + NADP(+) + H(+) = Hg(2+) + NADPH. With respect to regulation, uses NADPH as the preferred electron donor, but shows slight activity with NADH as well. Inhibited by Cu(2+), Cd(2+), Zn(2+) and Co(2+), with Cu(2+) showing the strongest inhibition. Enzyme activity is enhanced by b-mercaptoethanol and NaCl up to concentrations of 500 uM and 100 mM respectively, followed by inhibition at higher concentrations. Resistance to Hg(2+) in bacteria appears to be governed by a specialized system which includes mercuric reductase. MerA protein is responsible for volatilizing mercury as Hg(0). Catalyzes reduction of Hg(2+) to elemental Hg, which is volatile and can diffuse out of cells passively. Plays a pivotal role in mercury resistance and cell protection. This Lysinibacillus sphaericus (Bacillus sphaericus) protein is Mercuric reductase.